A 382-amino-acid chain; its full sequence is Protein PEP-RELATED DEVELOPMENT ARRESTED 1 homolog, chloroplastic (382 aa).

Residues 1 to 44 constitute a chloroplast transit peptide; it reads MAILPLSISHSLTSALSATSSGIGRPVARLLHPRVPSRPTVICL.

The protein localises to the plastid. Its subcellular location is the chloroplast stroma. The protein resides in the chloroplast nucleoid. Functionally, plays an essential role in early steps of chloroplast development. May be involved in the redox control of plastid gene expression by maintening the redox state around chloroplast nucleoids. May positively regulate plastid-encoded RNA polymerase (PEP) activity. In Oryza sativa subsp. japonica (Rice), this protein is Protein PEP-RELATED DEVELOPMENT ARRESTED 1 homolog, chloroplastic.